The sequence spans 407 residues: MVWSWVAMASRWGPLVGLAPRCLWLLGAVLLMDASARPANHSSTRERAANREENEILPPDHLNGVKLEMDGHLNRGFHQEVFLGKDLGGFEEDVEPRRSRRKLMVIFSKVDVNTDRKISAKEMQRWIMEKTAEHFQEAMEESKTHFRAVDPDGDGHVSWDEYKVKFLASKGHSEKEVADAIRLNEELKVDEETQEVLENLKDRWYQADSPPADLLLTEEEFLSFLHPEHSRGMLRFMVKEIVRDLGEAGSSLAGAPGPGDQRQGPGIAGKSGKVLREPQPGCGLIRSRLTDQDGDKQLSLPEFVSLPVGTVENQQGQDIDDNWVKDRKKEFEELIDSNHDGIVTAEELESYMDPMNEYNALNEAKQMIAVADENQNHHLEPEEVLKYSEFFTGSKLVDYARSVHEEF.

Positions Met1–Ser35 are cleaved as a signal peptide. N-linked (GlcNAc...) asparagine glycosylation occurs at Asn40. EF-hand domains follow at residues Arg98–Glu133 and Glu137–His172. Residue Ser99 is modified to Phosphoserine. Ca(2+) is bound by residues Asp111, Asn113, Asp115, Lys117, Glu122, Asp150, Asp152, Asp154, His156, and Glu161. A phosphothreonine mark is found at Thr193 and Thr217. Low complexity predominate over residues Gly249–Gly259. The disordered stretch occupies residues Gly249–Cys282. Ca(2+)-binding residues include Asp291, Asp293, Asp295, Gln297, and Glu302. EF-hand domains follow at residues Asp291–Asn313, Trp323–Tyr358, and Asn359–Ser394. The residue at position 310 (Thr310) is a Phosphothreonine. 3 residues coordinate Ca(2+): Asp336, Asn338, and Asp340. Position 344 is a phosphothreonine (Thr344). The Ca(2+) site is built by Glu347, Asp372, Asn374, Asn376, His378, and Glu383. The tract at residues Pro354–Phe407 is necessary for intracellular retention in Golgi apparatus lumen.

The protein belongs to the CREC family.

The protein resides in the golgi apparatus lumen. Its function is as follows. May regulate calcium-dependent activities in the endoplasmic reticulum lumen or post-ER compartment. The sequence is that of 45 kDa calcium-binding protein (SDF4) from Macaca fascicularis (Crab-eating macaque).